Reading from the N-terminus, the 160-residue chain is uncharacterized protein (160 aa).

Residues 20-152 (EREIWVLYMK…VYEGLSILSR (133 aa)) enclose the HTH marR-type domain. Positions 66 to 89 (VSDIAEKMGASLSNTTGLLDRLEK) form a DNA-binding region, H-T-H motif.

This is an uncharacterized protein from Bacillus subtilis (strain 168).